The sequence spans 428 residues: Elongation factor 1-alpha (428 aa).

In terms of domain architecture, tr-type G spans 5-217 (KPHVNIVFIG…DQIPEPEKPT (213 aa)). The G1 stretch occupies residues 14 to 21 (GHVDHGKS). Residue 14–21 (GHVDHGKS) coordinates GTP. Ser21 lines the Mg(2+) pocket. The G2 stretch occupies residues 68–72 (GITID). The tract at residues 89–92 (DAPG) is G3. GTP is bound by residues 89–93 (DAPGH) and 144–147 (NKMD). A G4 region spans residues 144–147 (NKMD). The segment at 181–183 (SAW) is G5.

This sequence belongs to the TRAFAC class translation factor GTPase superfamily. Classic translation factor GTPase family. EF-Tu/EF-1A subfamily.

The protein localises to the cytoplasm. It catalyses the reaction GTP + H2O = GDP + phosphate + H(+). Functionally, GTP hydrolase that promotes the GTP-dependent binding of aminoacyl-tRNA to the A-site of ribosomes during protein biosynthesis. The chain is Elongation factor 1-alpha from Thermococcus sibiricus (strain DSM 12597 / MM 739).